Here is a 248-residue protein sequence, read N- to C-terminus: Tyrosine recombinase XerD-like (248 aa).

Residues 1–72 (MKSYIEPFIA…TANQFLYYLY (72 aa)) form the Core-binding (CB) domain. The Tyr recombinase domain maps to 85–248 (DTMKVMRTEK…PVTLEKYYKS (164 aa)). Active-site residues include Lys149 and Arg213. Tyr245 serves as the catalytic O-(3'-phospho-DNA)-tyrosine intermediate.

This sequence belongs to the 'phage' integrase family. XerD-like subfamily.

The protein localises to the cytoplasm. Its function is as follows. Putative tyrosine recombinase. Not involved in the cutting and rejoining of the recombining DNA molecules on dif(SL) site. The polypeptide is Tyrosine recombinase XerD-like (Streptococcus pyogenes serotype M4 (strain MGAS10750)).